Consider the following 430-residue polypeptide: Serine--tRNA ligase (430 aa).

Position 236 to 238 (threonine 236 to glutamate 238) interacts with L-serine. ATP is bound at residue arginine 267–glutamate 269. Position 290 (glutamate 290) interacts with L-serine. Glutamate 354–serine 357 is an ATP binding site. Serine 390 is an L-serine binding site.

Belongs to the class-II aminoacyl-tRNA synthetase family. Type-1 seryl-tRNA synthetase subfamily. Homodimer. The tRNA molecule binds across the dimer.

It is found in the cytoplasm. The enzyme catalyses tRNA(Ser) + L-serine + ATP = L-seryl-tRNA(Ser) + AMP + diphosphate + H(+). It catalyses the reaction tRNA(Sec) + L-serine + ATP = L-seryl-tRNA(Sec) + AMP + diphosphate + H(+). The protein operates within aminoacyl-tRNA biosynthesis; selenocysteinyl-tRNA(Sec) biosynthesis; L-seryl-tRNA(Sec) from L-serine and tRNA(Sec): step 1/1. Its function is as follows. Catalyzes the attachment of serine to tRNA(Ser). Is also able to aminoacylate tRNA(Sec) with serine, to form the misacylated tRNA L-seryl-tRNA(Sec), which will be further converted into selenocysteinyl-tRNA(Sec). This is Serine--tRNA ligase from Gloeothece citriformis (strain PCC 7424) (Cyanothece sp. (strain PCC 7424)).